A 395-amino-acid polypeptide reads, in one-letter code: S-adenosylmethionine synthase (395 aa).

Histidine 15 is a binding site for ATP. Aspartate 17 contributes to the Mg(2+) binding site. Glutamate 43 is a binding site for K(+). 2 residues coordinate L-methionine: glutamate 56 and glutamine 99. The interval 99-109 is flexible loop; it reads QSPDIAMGVDE. ATP contacts are provided by residues 173–175, 239–240, aspartate 248, 254–255, alanine 271, and lysine 275; these read DGK, RF, and RK. L-methionine is bound at residue aspartate 248. Position 279 (lysine 279) interacts with L-methionine.

The protein belongs to the AdoMet synthase family. In terms of assembly, homotetramer; dimer of dimers. The cofactor is Mg(2+). K(+) is required as a cofactor.

The protein localises to the cytoplasm. The catalysed reaction is L-methionine + ATP + H2O = S-adenosyl-L-methionine + phosphate + diphosphate. Its pathway is amino-acid biosynthesis; S-adenosyl-L-methionine biosynthesis; S-adenosyl-L-methionine from L-methionine: step 1/1. In terms of biological role, catalyzes the formation of S-adenosylmethionine (AdoMet) from methionine and ATP. The overall synthetic reaction is composed of two sequential steps, AdoMet formation and the subsequent tripolyphosphate hydrolysis which occurs prior to release of AdoMet from the enzyme. The sequence is that of S-adenosylmethionine synthase from Desulforudis audaxviator (strain MP104C).